The sequence spans 560 residues: Nibrin homolog (560 aa).

The FHA domain maps to 25–87 (YKVGRKDCDV…YGTFFNKVQG (63 aa)). The BRCT domain maps to 115–190 (TFRLSFVPIV…KQIVLGDWFK (76 aa)).

The protein belongs to the Nibrin family. As to quaternary structure, component of the MRN complex composed of two heterodimers RAD50 and MRE11 associated with a single NBS1. Mostly expressed in the shoot apex and young flower, but also in young leaves, root tips and stamen, tissues where frequent cell division or meiosis may occur.

It localises to the nucleus. The protein resides in the chromosome. Its function is as follows. Component of the MRN complex, which plays a central role in double-strand break (DSB) repair, DNA recombination, maintenance of telomere integrity and meiosis. The MRN complex is involved in the repair of DNA double-strand breaks (DSBs) via homologous recombination (HR), an error-free mechanism which primarily occurs during S and G2 phases. The complex (1) mediates the end resection of damaged DNA, which generates proper single-stranded DNA, a key initial steps in HR, and is (2) required for the recruitment of other repair factors and efficient activation of ATM and ATR upon DNA damage. The MRN complex possesses single-strand endonuclease activity and double-strand-specific 3'-5' exonuclease activity, which are provided by MRE11, to initiate end resection, which is required for single-strand invasion and recombination. Within the MRN complex, NBS1 acts as a protein-protein adapter, which specifically recognizes and binds phosphorylated proteins, promoting their recruitment to DNA damage sites. Recruits MRE11 and RAD50 components of the MRN complex to DSBs in response to DNA damage. This Oryza sativa subsp. japonica (Rice) protein is Nibrin homolog.